The primary structure comprises 209 residues: Octanoyltransferase (209 aa).

The region spanning G29–E209 is the BPL/LPL catalytic domain. Substrate contacts are provided by residues R68–H75, A141–G143, and G154–A156. C172 (acyl-thioester intermediate) is an active-site residue.

The protein belongs to the LipB family.

The protein localises to the cytoplasm. The enzyme catalyses octanoyl-[ACP] + L-lysyl-[protein] = N(6)-octanoyl-L-lysyl-[protein] + holo-[ACP] + H(+). It functions in the pathway protein modification; protein lipoylation via endogenous pathway; protein N(6)-(lipoyl)lysine from octanoyl-[acyl-carrier-protein]: step 1/2. In terms of biological role, catalyzes the transfer of endogenously produced octanoic acid from octanoyl-acyl-carrier-protein onto the lipoyl domains of lipoate-dependent enzymes. Lipoyl-ACP can also act as a substrate although octanoyl-ACP is likely to be the physiological substrate. The chain is Octanoyltransferase from Neorickettsia sennetsu (strain ATCC VR-367 / Miyayama) (Ehrlichia sennetsu).